The sequence spans 201 residues: Ependymin-related protein 2 (201 aa).

The signal sequence occupies residues 1–21; that stretch reads MILQVVLLLACLSGAIVSTGA. N-linked (GlcNAc...) asparagine glycans are attached at residues Asn38 and Asn137. Residues 199 to 201 carry the Microbody targeting signal motif; sequence CRA.

The protein belongs to the ependymin family. Component of the acid-soluble and acid-insoluble organic matrix of calcified shell layers (at protein level).

It is found in the secreted. The polypeptide is Ependymin-related protein 2 (Haliotis asinina (Donkey's ear abalone)).